The chain runs to 179 residues: Small ribosomal subunit protein eS10x (179 aa).

Residues 90-179 (TLKKSAKPGG…AAAPSGSGLP (90 aa)) are disordered. Positions 108 to 129 (DRSRGPRHEGGDRPRFGDRDGY) are enriched in basic and acidic residues. Gly residues predominate over residues 134 to 144 (RAGGEFGGEKG). A compositionally biased stretch (low complexity) spans 145-156 (GAPADYQPSFQG). The span at 157-167 (SGRGFGRGAGG) shows a compositional bias: gly residues. The span at 168–179 (YSAAAPSGSGLP) shows a compositional bias: low complexity.

This sequence belongs to the eukaryotic ribosomal protein eS10 family.

Its subcellular location is the cytoplasm. This is Small ribosomal subunit protein eS10x (RPS10C) from Arabidopsis thaliana (Mouse-ear cress).